Reading from the N-terminus, the 201-residue chain is Recombination protein RecR (201 aa).

The segment at 60-75 (CSVCGNVDTTDPCSIC) adopts a C4-type zinc-finger fold. One can recognise a Toprim domain in the interval 83–178 (TTIIVVEDVA…KITRLAHGVP (96 aa)).

Belongs to the RecR family.

Its function is as follows. May play a role in DNA repair. It seems to be involved in an RecBC-independent recombinational process of DNA repair. It may act with RecF and RecO. This is Recombination protein RecR from Bartonella quintana (strain Toulouse) (Rochalimaea quintana).